A 164-amino-acid chain; its full sequence is Small ribosomal subunit protein uS5 (164 aa).

The region spanning Leu-10–Val-73 is the S5 DRBM domain.

Belongs to the universal ribosomal protein uS5 family. In terms of assembly, part of the 30S ribosomal subunit. Contacts proteins S4 and S8.

With S4 and S12 plays an important role in translational accuracy. Its function is as follows. Located at the back of the 30S subunit body where it stabilizes the conformation of the head with respect to the body. The sequence is that of Small ribosomal subunit protein uS5 from Streptococcus pneumoniae serotype 2 (strain D39 / NCTC 7466).